The chain runs to 328 residues: NADH-quinone oxidoreductase subunit H (328 aa).

Transmembrane regions (helical) follow at residues 10-30 (IIKI…GTYF), 80-100 (IAPV…PFLP), 118-138 (IGIL…LLGG), 155-175 (AVFI…IMMV), 191-211 (ITSW…IAAF), 243-263 (LFFI…SLLF), 272-292 (LLGA…FLWT), and 306-326 (WLCW…TAIV).

This sequence belongs to the complex I subunit 1 family. NDH-1 is composed of 14 different subunits. Subunits NuoA, H, J, K, L, M, N constitute the membrane sector of the complex.

The protein resides in the cell inner membrane. It catalyses the reaction a quinone + NADH + 5 H(+)(in) = a quinol + NAD(+) + 4 H(+)(out). Functionally, NDH-1 shuttles electrons from NADH, via FMN and iron-sulfur (Fe-S) centers, to quinones in the respiratory chain. The immediate electron acceptor for the enzyme in this species is believed to be ubiquinone. Couples the redox reaction to proton translocation (for every two electrons transferred, four hydrogen ions are translocated across the cytoplasmic membrane), and thus conserves the redox energy in a proton gradient. This subunit may bind ubiquinone. In Sulfurimonas denitrificans (strain ATCC 33889 / DSM 1251) (Thiomicrospira denitrificans (strain ATCC 33889 / DSM 1251)), this protein is NADH-quinone oxidoreductase subunit H.